A 261-amino-acid polypeptide reads, in one-letter code: MDIVSRQKVRRFEAGTFQEIESSVATEYPLTIYVNDQELVTIVCTPEHLEDLVVGFLTSEGIVRGPGDIDSVDIIEATGHAKVSANFVNKFNAKYRGKRYITSCCGKSRENFYFQSDASLVNVKQNSNLKLTTDRIFRLMEKFEQNSATFHQTGGVHNAALCSSAEIIYSRMDIGRHNALDKIYGRALKDGTATDDKAIIFSGRISSEILVKTAKLGCGIILSRSAPTELAINMAEELNITTVGFIRGDRLNVYSGFERIT.

The Cysteine persulfide intermediate role is filled by cysteine 105. Position 245–250 (245–250 (FIRGDR)) interacts with Mo-bis(molybdopterin guanine dinucleotide).

Belongs to the FdhD family.

The protein localises to the cytoplasm. Functionally, required for formate dehydrogenase (FDH) activity. Acts as a sulfur carrier protein that transfers sulfur from IscS to the molybdenum cofactor prior to its insertion into FDH. The sequence is that of Sulfur carrier protein FdhD from Listeria innocua serovar 6a (strain ATCC BAA-680 / CLIP 11262).